The following is a 338-amino-acid chain: mRNA decay activator protein ZFP36L1 (338 aa).

Residues 1–111 (MTTTLVSATI…QKQPGSGQVN (111 aa)) are necessary and sufficient for the association with mRNA decay enzymes and mRNA decay activation. Residue S54 is modified to Phosphoserine; by MAPKAPK2. Positions 71–113 (LKGEPAPSLSSRDSRFRDRSFSEGGERLLPTQKQPGSGQVNSS) are disordered. Basic and acidic residues predominate over residues 82 to 96 (RDSRFRDRSFSEGGE). S90 carries the phosphoserine; by PKB/AKT1 modification. A Phosphoserine; by PKB/AKT1 and MAPKAPK2 modification is found at S92. The span at 101 to 113 (TQKQPGSGQVNSS) shows a compositional bias: polar residues. C3H1-type zinc fingers lie at residues 114 to 142 (RYKT…HGIH) and 152 to 180 (KYKT…HNAE). The tract at residues 185-338 (LAGGRDLSAD…IFSRLSISDD (154 aa)) is necessary for mRNA decay activation. S203 carries the post-translational modification Phosphoserine; by PKB/AKT1 and MAPKAPK2. Positions 273 to 338 (SPTTFLFRPM…IFSRLSISDD (66 aa)) are disordered. Residues 305 to 318 (YLSSSSSSHSGSDS) are compositionally biased toward low complexity. Residue S318 is modified to Phosphoserine. S334 is modified (phosphoserine; by RPS6KA1).

In terms of assembly, associates with the cytoplasmic CCR4-NOT deadenylase and RNA exosome complexes to trigger ARE-containing mRNA deadenylation and decay processes. Interacts with CNOT1. Interacts (via N-terminus) with CNOT6. Interacts with CNOT7; this interaction is inhibited in response to phorbol 12-myristate 13-acetate (PMA) treatment in a p38 MAPK-dependent manner. Interacts with DCP1A. Interacts (via N-terminus) with DCP2. Interacts (via N-terminus) with EXOSC2. Interacts with XRN1. Interacts (via phosphorylated form) with YWHAB; this interaction occurs in a protein kinase AKT1-dependent manner. Interacts (via phosphorylated form) with YWHAZ; this interaction occurs in a p38 MAPK- and AKT-signaling pathways. Post-translationally, phosphorylated. Phosphorylated by RPS6KA1 at Ser-334 upon phorbol 12-myristate 13-acetate (PMA) treatment; this phosphorylation results in dissociation of the CCR4-NOT deadenylase complex and induces p38 MAPK-mediated stabilization of the low-density lipoprotein receptor LDLR mRNA. Phosphorylated by protein kinase AKT1 at Ser-92 and Ser-203 in response to insulin; these phosphorylations stabilize ZFP36L1, increase the association with 14-3-3 proteins and mediate ARE-containing mRNA stabilization. AKT1-mediated phosphorylation at Ser-92 does not impair ARE-containing RNA-binding. Phosphorylated at Ser-54, Ser-92 and Ser-203 by MAPKAPK2; these phosphorylations increase the association with 14-3-3 proteins and mediate ARE-containing mRNA stabilization in a protein kinase AKT1-independent manner. MAPKAPK2-mediated phosphorylations at Ser-54, Ser-92 and Ser-203 do not impair ARE-containing RNA-binding. Phosphorylations increase the association with 14-3-3 proteins and mediate ARE-containing mRNA stabilization during early adipogenesis in a p38 MAPK- and AKT-dependent manner. In terms of processing, ubiquitinated. Ubiquitination leads to proteasomal degradation, a process inhibited by phosphorylations at Ser-90, Ser-92 and Ser-203. As to expression, expressed in preadipocytes and adipocytes. Expressed in the proximal and distal tubules in the renal cortex (at protein level). Expressed in ovary, heart, kidney, lung, spleen and thymus. Weakly expressed in brain, liver and testis. Expressed in osteoblasts. Expressed in embryonic stem cells (ESCs). Expressed through B lymphocyte development.

The protein localises to the nucleus. It localises to the cytoplasm. Its subcellular location is the cytoplasmic granule. It is found in the P-body. Its function is as follows. Zinc-finger RNA-binding protein that destabilizes several cytoplasmic AU-rich element (ARE)-containing mRNA transcripts by promoting their poly(A) tail removal or deadenylation, and hence provide a mechanism for attenuating protein synthesis. Acts as a 3'-untranslated region (UTR) ARE mRNA-binding adapter protein to communicate signaling events to the mRNA decay machinery. Functions by recruiting the CCR4-NOT deadenylating complex and components of the cytoplasmic RNA decay machinery to the bound ARE-containing mRNAs, and hence promotes ARE-mediated mRNA deadenylation and decay processes. Also induces the degradation of ARE-containing mRNAs even in absence of poly(A) tail. Binds to 3'-UTR ARE of numerous mRNAs. Positively regulates early adipogenesis by promoting ARE-mediated mRNA decay of immediate early genes (IEGs). Promotes ARE-mediated mRNA decay of mineralocorticoid receptor NR3C2 mRNA in response to hypertonic stress. Negatively regulates hematopoietic/erythroid cell differentiation by promoting ARE-mediated mRNA decay of the transcription factor STAT5B mRNA. Positively regulates monocyte/macrophage cell differentiation by promoting ARE-mediated mRNA decay of the cyclin-dependent kinase CDK6 mRNA. Promotes degradation of ARE-containing pluripotency-associated mRNAs in embryonic stem cells (ESCs), such as NANOG, through a fibroblast growth factor (FGF)-induced MAPK-dependent signaling pathway, and hence attenuates ESC self-renewal and positively regulates mesendoderm differentiation. May play a role in mediating pro-apoptotic effects in malignant B-cells by promoting ARE-mediated mRNA decay of BCL2 mRNA. In association with ZFP36L2 maintains quiescence on developing B lymphocytes by promoting ARE-mediated decay of several mRNAs encoding cell cycle regulators that help B cells progress through the cell cycle, and hence ensuring accurate variable-diversity-joining (VDJ) recombination and functional immune cell formation. Together with ZFP36L2 is also necessary for thymocyte development and prevention of T-cell acute lymphoblastic leukemia (T-ALL) transformation by promoting ARE-mediated mRNA decay of the oncogenic transcription factor NOTCH1 mRNA. Involved in the delivery of target ARE-mRNAs to processing bodies (PBs). In addition to its cytosolic mRNA-decay function, plays a role in the regulation of nuclear mRNA 3'-end processing; modulates mRNA 3'-end maturation efficiency of the DLL4 mRNA through binding with an ARE embedded in a weak noncanonical polyadenylation (poly(A)) signal in endothelial cells. Also involved in the regulation of stress granule (SG) and P-body (PB) formation and fusion. Plays a role in vasculogenesis and endocardial development. Involved in the regulation of keratinocyte proliferation, differentiation and apoptosis. Plays a role in myoblast cell differentiation. The sequence is that of mRNA decay activator protein ZFP36L1 from Mus musculus (Mouse).